A 319-amino-acid polypeptide reads, in one-letter code: Thioredoxin reductase (319 aa).

36 to 48 (EGFMAGGVAAGGQ) provides a ligand contact to FAD. A disulfide bond links Cys-144 and Cys-147. 289–298 (DVQDKVYRQA) contributes to the FAD binding site.

This sequence belongs to the class-II pyridine nucleotide-disulfide oxidoreductase family. As to quaternary structure, homodimer. FAD serves as cofactor.

It catalyses the reaction [thioredoxin]-dithiol + NADP(+) = [thioredoxin]-disulfide + NADPH + H(+). This Dictyostelium discoideum (Social amoeba) protein is Thioredoxin reductase (trrA).